Consider the following 264-residue polypeptide: Phosphonoacetaldehyde hydrolase (264 aa).

D9 functions as the Nucleophile in the catalytic mechanism. 2 residues coordinate Mg(2+): D9 and A11. K50 (schiff-base intermediate with substrate) is an active-site residue. D183 contributes to the Mg(2+) binding site.

Belongs to the HAD-like hydrolase superfamily. PhnX family. In terms of assembly, homodimer. Mg(2+) is required as a cofactor.

It carries out the reaction phosphonoacetaldehyde + H2O = acetaldehyde + phosphate + H(+). Functionally, involved in phosphonate degradation. This Bacillus cereus protein is Phosphonoacetaldehyde hydrolase (phnX).